A 331-amino-acid chain; its full sequence is Major ferric iron-binding protein (331 aa).

A signal peptide spans 1 to 22 (MKTSIRYALLAAALTAATPALA). Positions 31, 79, 217, and 218 each coordinate Fe cation.

This sequence belongs to the bacterial solute-binding protein 1 family.

The protein resides in the periplasm. In terms of biological role, this protein may be a central component in the iron-acquisition system. This Neisseria meningitidis serogroup A / serotype 4A (strain DSM 15465 / Z2491) protein is Major ferric iron-binding protein (fbpA).